The sequence spans 104 residues: Pterin-4-alpha-carbinolamine dehydratase (104 aa).

Ala2 is modified (N-acetylalanine). Residues 61-63 (DHH) and 78-81 (STHE) contribute to the substrate site.

Belongs to the pterin-4-alpha-carbinolamine dehydratase family. As to quaternary structure, homotetramer and homodimer. Heterotetramer with HNF1A; formed by a dimer of dimers. Interacts with HNF1B (via HNF-p1 domain); the interaction increases HNF1B transactivation activity.

Its subcellular location is the cytoplasm. The protein localises to the nucleus. The enzyme catalyses (4aS,6R)-4a-hydroxy-L-erythro-5,6,7,8-tetrahydrobiopterin = (6R)-L-erythro-6,7-dihydrobiopterin + H2O. In terms of biological role, involved in tetrahydrobiopterin biosynthesis. Seems to both prevent the formation of 7-pterins and accelerate the formation of quinonoid-BH2. Coactivator for HNF1A-dependent transcription. Regulates the dimerization of homeodomain protein HNF1A and enhances its transcriptional activity. Also acts as a coactivator for HNF1B-dependent transcription. The protein is Pterin-4-alpha-carbinolamine dehydratase (Pcbd1) of Rattus norvegicus (Rat).